Here is a 342-residue protein sequence, read N- to C-terminus: Probable dual-specificity RNA methyltransferase RlmN (342 aa).

Glu91 functions as the Proton acceptor in the catalytic mechanism. One can recognise a Radical SAM core domain in the interval 97-327; sequence YKHGNSICVS…TTIRREMGAD (231 aa). An intrachain disulfide couples Cys104 to Cys332. [4Fe-4S] cluster-binding residues include Cys111, Cys115, and Cys118. S-adenosyl-L-methionine contacts are provided by residues 158–159, Ser190, 213–215, and Asn289; these read GE and SLH. Cys332 serves as the catalytic S-methylcysteine intermediate.

The protein belongs to the radical SAM superfamily. RlmN family. [4Fe-4S] cluster serves as cofactor.

The protein resides in the cytoplasm. The enzyme catalyses adenosine(2503) in 23S rRNA + 2 reduced [2Fe-2S]-[ferredoxin] + 2 S-adenosyl-L-methionine = 2-methyladenosine(2503) in 23S rRNA + 5'-deoxyadenosine + L-methionine + 2 oxidized [2Fe-2S]-[ferredoxin] + S-adenosyl-L-homocysteine. The catalysed reaction is adenosine(37) in tRNA + 2 reduced [2Fe-2S]-[ferredoxin] + 2 S-adenosyl-L-methionine = 2-methyladenosine(37) in tRNA + 5'-deoxyadenosine + L-methionine + 2 oxidized [2Fe-2S]-[ferredoxin] + S-adenosyl-L-homocysteine. Functionally, specifically methylates position 2 of adenine 2503 in 23S rRNA and position 2 of adenine 37 in tRNAs. The polypeptide is Probable dual-specificity RNA methyltransferase RlmN (Clostridium botulinum (strain ATCC 19397 / Type A)).